Reading from the N-terminus, the 319-residue chain is Pantothenate kinase (319 aa).

96-103 (GSVAVGKS) lines the ATP pocket.

Belongs to the prokaryotic pantothenate kinase family.

It is found in the cytoplasm. It carries out the reaction (R)-pantothenate + ATP = (R)-4'-phosphopantothenate + ADP + H(+). It participates in cofactor biosynthesis; coenzyme A biosynthesis; CoA from (R)-pantothenate: step 1/5. This chain is Pantothenate kinase (coaA), found in Bacillus subtilis (strain 168).